The primary structure comprises 99 residues: Plastocyanin (99 aa).

The Plastocyanin-like domain maps to I1–N99. The Cu cation site is built by H37, C84, H87, and M92.

Belongs to the plastocyanin family. Requires Cu(2+) as cofactor.

It localises to the plastid. Its subcellular location is the chloroplast thylakoid membrane. Participates in electron transfer between P700 and the cytochrome b6-f complex in photosystem I. This Solanum crispum (Chilean potato-tree) protein is Plastocyanin (PETE).